We begin with the raw amino-acid sequence, 90 residues long: Large ribosomal subunit protein bL27 (90 aa).

This sequence belongs to the bacterial ribosomal protein bL27 family.

The polypeptide is Large ribosomal subunit protein bL27 (Paracoccus denitrificans (strain Pd 1222)).